The primary structure comprises 154 residues: 3-dehydroquinate dehydratase 2 (154 aa).

Tyr-23 acts as the Proton acceptor in catalysis. Substrate-binding residues include Asn-79, His-85, and Asp-92. His-105 (proton donor) is an active-site residue. Substrate contacts are provided by residues 106 to 107 (IS) and Arg-116.

It belongs to the type-II 3-dehydroquinase family. Homododecamer.

It catalyses the reaction 3-dehydroquinate = 3-dehydroshikimate + H2O. The protein operates within metabolic intermediate biosynthesis; chorismate biosynthesis; chorismate from D-erythrose 4-phosphate and phosphoenolpyruvate: step 3/7. Its function is as follows. Catalyzes a trans-dehydration via an enolate intermediate. This is 3-dehydroquinate dehydratase 2 (aroQ2) from Ralstonia nicotianae (strain ATCC BAA-1114 / GMI1000) (Ralstonia solanacearum).